The primary structure comprises 330 residues: Apolipoprotein E (330 aa).

Positions 1-18 (MKVLWAALVVALLAGCWA) are cleaved as a signal peptide. The disordered stretch occupies residues 21 to 43 (EPESPLQGKPEPELEPELEPKRE). 7 consecutive repeat copies span residues 96 to 117 (TLMEETMKEIKAYRAELEEQLG), 118 to 139 (PMASETQARVAKELQAAQARLR), 140 to 161 (SDMEDVRTRLTQYRGEVQAMLG), 162 to 183 (QSTEELRARFASHMRKLRKRVL), 184 to 205 (RDAEDLQKRLAVYRAGVREGAE), 206 to 227 (RSVSSIRERLWPLLEQARTRHA), and 247 to 268 (GRLEEVGSRARSHLDEVREQME). The tract at residues 96–268 (TLMEETMKEI…HLDEVREQME (173 aa)) is 7 X 22 AA approximate tandem repeats. Residue Met159 is modified to Methionine sulfoxide. Position 163 is a phosphoserine (Ser163). The LDL and other lipoprotein receptors binding stretch occupies residues 174–184 (HMRKLRKRVLR). Residue 178–181 (LRKR) coordinates heparin. Residues 226–303 (HANLATQPLR…SWFEPLVEDM (78 aa)) are lipid-binding and lipoprotein association. 242-249 (GQQLRGRL) provides a ligand contact to heparin. Residues 279 to 330 (NQMRQQVEAFQARLKSWFEPLVEDMQRQWAGLVEKVQVAVGTSPTTPPLETK) form a homooligomerization region. The interval 291–303 (RLKSWFEPLVEDM) is specificity for association with VLDL.

The protein belongs to the apolipoprotein A1/A4/E family. As to quaternary structure, homotetramer. May interact with ABCA1; functionally associated with ABCA1 in the biogenesis of HDLs. May interact with APP/A4 amyloid-beta peptide; the interaction is extremely stable in vitro but its physiological significance is unclear. May interact with MAPT. May interact with MAP2. In the cerebrospinal fluid, interacts with secreted SORL1. Interacts with PMEL; this allows the loading of PMEL luminal fragment on ILVs to induce fibril nucleation. APOE exists as multiple glycosylated and sialylated glycoforms within cells and in plasma. The extent of glycosylation and sialylation are tissue and context specific. Post-translationally, glycated in plasma VLDL. In terms of processing, phosphorylated by FAM20C in the extracellular medium.

It is found in the secreted. It localises to the extracellular space. The protein localises to the extracellular matrix. Its subcellular location is the extracellular vesicle. The protein resides in the endosome. It is found in the multivesicular body. Functionally, APOE is an apolipoprotein, a protein associating with lipid particles, that mainly functions in lipoprotein-mediated lipid transport between organs via the plasma and interstitial fluids. APOE is a core component of plasma lipoproteins and is involved in their production, conversion and clearance. Apolipoproteins are amphipathic molecules that interact both with lipids of the lipoprotein particle core and the aqueous environment of the plasma. As such, APOE associates with chylomicrons, chylomicron remnants, very low density lipoproteins (VLDL) and intermediate density lipoproteins (IDL) but shows a preferential binding to high-density lipoproteins (HDL). It also binds a wide range of cellular receptors including the LDL receptor/LDLR, the LDL receptor-related proteins LRP1, LRP2 and LRP8 and the very low-density lipoprotein receptor/VLDLR that mediate the cellular uptake of the APOE-containing lipoprotein particles. Finally, APOE also has a heparin-binding activity and binds heparan-sulfate proteoglycans on the surface of cells, a property that supports the capture and the receptor-mediated uptake of APOE-containing lipoproteins by cells. A main function of APOE is to mediate lipoprotein clearance through the uptake of chylomicrons, VLDLs, and HDLs by hepatocytes. APOE is also involved in the biosynthesis by the liver of VLDLs as well as their uptake by peripheral tissues ensuring the delivery of triglycerides and energy storage in muscle, heart and adipose tissues. By participating in the lipoprotein-mediated distribution of lipids among tissues, APOE plays a critical role in plasma and tissues lipid homeostasis. APOE is also involved in two steps of reverse cholesterol transport, the HDLs-mediated transport of cholesterol from peripheral tissues to the liver, and thereby plays an important role in cholesterol homeostasis. First, it is functionally associated with ABCA1 in the biogenesis of HDLs in tissues. Second, it is enriched in circulating HDLs and mediates their uptake by hepatocytes. APOE also plays an important role in lipid transport in the central nervous system, regulating neuron survival and sprouting. This chain is Apolipoprotein E (APOE), found in Neomonachus schauinslandi (Hawaiian monk seal).